The following is a 221-amino-acid chain: UPF0502 protein PLES_16071 (221 aa).

It belongs to the UPF0502 family.

This chain is UPF0502 protein PLES_16071, found in Pseudomonas aeruginosa (strain LESB58).